The primary structure comprises 653 residues: Fructose-1,6-bisphosphatase class 3 (653 aa).

It belongs to the FBPase class 3 family. Requires Mn(2+) as cofactor.

The enzyme catalyses beta-D-fructose 1,6-bisphosphate + H2O = beta-D-fructose 6-phosphate + phosphate. It participates in carbohydrate biosynthesis; gluconeogenesis. In Listeria monocytogenes serotype 4b (strain CLIP80459), this protein is Fructose-1,6-bisphosphatase class 3.